Reading from the N-terminus, the 123-residue chain is Large ribosomal subunit protein bL12 (123 aa).

This sequence belongs to the bacterial ribosomal protein bL12 family. As to quaternary structure, homodimer. Part of the ribosomal stalk of the 50S ribosomal subunit. Forms a multimeric L10(L12)X complex, where L10 forms an elongated spine to which 2 to 4 L12 dimers bind in a sequential fashion. Binds GTP-bound translation factors.

Forms part of the ribosomal stalk which helps the ribosome interact with GTP-bound translation factors. Is thus essential for accurate translation. The polypeptide is Large ribosomal subunit protein bL12 (Metamycoplasma arthritidis (strain 158L3-1) (Mycoplasma arthritidis)).